The primary structure comprises 308 residues: Glutamyl-Q tRNA(Asp) synthetase (308 aa).

L-glutamate-binding positions include 19–23 and E55; that span reads RFAPS. A 'HIGH' region motif is present at residues 22-32; the sequence is PSPSGELHFGS. Zn(2+)-binding residues include C111, C113, Y125, and C129. Residues Y182 and R200 each contribute to the L-glutamate site. A 'KMSKS' region motif is present at residues 238 to 242; it reads KLSKQ. Position 241 (K241) interacts with ATP.

The protein belongs to the class-I aminoacyl-tRNA synthetase family. GluQ subfamily. The cofactor is Zn(2+).

Catalyzes the tRNA-independent activation of glutamate in presence of ATP and the subsequent transfer of glutamate onto a tRNA(Asp). Glutamate is transferred on the 2-amino-5-(4,5-dihydroxy-2-cyclopenten-1-yl) moiety of the queuosine in the wobble position of the QUC anticodon. The protein is Glutamyl-Q tRNA(Asp) synthetase of Shigella flexneri.